Here is a 143-residue protein sequence, read N- to C-terminus: 3-hydroxyacyl-[acyl-carrier-protein] dehydratase FabZ (143 aa).

Residue His49 is part of the active site.

Belongs to the thioester dehydratase family. FabZ subfamily.

It is found in the cytoplasm. The enzyme catalyses a (3R)-hydroxyacyl-[ACP] = a (2E)-enoyl-[ACP] + H2O. Functionally, involved in unsaturated fatty acids biosynthesis. Catalyzes the dehydration of short chain beta-hydroxyacyl-ACPs and long chain saturated and unsaturated beta-hydroxyacyl-ACPs. This chain is 3-hydroxyacyl-[acyl-carrier-protein] dehydratase FabZ, found in Ehrlichia chaffeensis (strain ATCC CRL-10679 / Arkansas).